Here is a 335-residue protein sequence, read N- to C-terminus: Hsp90 co-chaperone Cdc37-like 1 (335 aa).

The segment covering 1–11 (MEQPWPPPGPW) has biased composition (pro residues). The interval 1–42 (MEQPWPPPGPWSFPRTGGETEEESDLDVSPSSSHYSPVPDGG) is disordered. A self-association region spans residues 2 to 170 (EQPWPPPGPW…YEQKIRHFGM (169 aa)). Residues 27–40 (DVSPSSSHYSPVPD) show a composition bias toward low complexity. Phosphoserine occurs at positions 32 and 88. Residues 84 to 120 (HNSESLDQEHAKAQTAVSELRQREEEWRQKEEALVQR) adopt a coiled-coil conformation. The self-association and interaction with Hsp90 stretch occupies residues 147–276 (KTEDEDKSQS…ARVRLYAQSQ (130 aa)). The interaction with Hsp70 stretch occupies residues 266 to 335 (KARVRLYAQS…EDDDRMMDTV (70 aa)). Positions 277–335 (SFAPVTVENHAPHSGVGCIGSAEPLPQNPDSLQCCPPAPLCSVDSVVHKEDDDRMMDTV) are required for interaction with STIP1.

Belongs to the CDC37 family. As to quaternary structure, self-associates. Forms complexes with Hsp70 and Hsp90. Interacts with CDC37, FKBP4, PPID and STIP1.

It localises to the cytoplasm. Its function is as follows. Co-chaperone that binds to numerous proteins and promotes their interaction with Hsp70 and Hsp90. In Rattus norvegicus (Rat), this protein is Hsp90 co-chaperone Cdc37-like 1 (Cdc37l1).